Reading from the N-terminus, the 84-residue chain is Delta-conotoxin-like Bt6.4 (84 aa).

The first 22 residues, 1 to 22 (MKLTCMVIVAVLFLTAWTSVMA), serve as a signal peptide directing secretion. The propeptide occupies 23-57 (DGSINRPDIAEGWQKFFSKARDEMKNRAASELNKR). Intrachain disulfides connect Cys-58–Cys-74, Cys-65–Cys-78, and Cys-73–Cys-82.

The protein belongs to the conotoxin O1 superfamily. As to expression, expressed by the venom duct.

Its subcellular location is the secreted. This toxin activates voltage-gated sodium channels. It shifts the voltage-dependence of activation to more hyperpolarized potentials but has only little effect on channel inactivation. It is active on Nav1.3/SCN3A (EC(50)=3.98 nM), Nav1.4/SCN4A (EC(50)=4.99 nM), Nav1.6/SCN8A (EC(50)=1.27 nM) and Nav1.7/SCN9A (EC(50)=2.42 nM) voltage-gated sodium channels. In vivo, it induces nocifensive or pain-like behaviors in mice when injected intraplantarly. This chain is Delta-conotoxin-like Bt6.4, found in Conus betulinus (Beech cone).